An 86-amino-acid polypeptide reads, in one-letter code: Small ribosomal subunit protein bS16 (86 aa).

Belongs to the bacterial ribosomal protein bS16 family.

This Trichormus variabilis (strain ATCC 29413 / PCC 7937) (Anabaena variabilis) protein is Small ribosomal subunit protein bS16.